Reading from the N-terminus, the 348-residue chain is Holliday junction branch migration complex subunit RuvB (348 aa).

The large ATPase domain (RuvB-L) stretch occupies residues 4-186; that stretch reads TDRIISANTV…FGIIQRLEFY (183 aa). Residues Ile25, Arg26, Gly67, Lys70, Thr71, Thr72, 133–135, Arg176, Tyr186, and Arg223 contribute to the ATP site; that span reads EDY. Position 71 (Thr71) interacts with Mg(2+). The small ATPAse domain (RuvB-S) stretch occupies residues 187 to 257; that stretch reads SVDDLAKIVY…IADKALTMLK (71 aa). The segment at 260–348 is head domain (RuvB-H); that stretch reads PVGFDHMDHK…SSDQQQNLSL (89 aa). Residues Arg315 and Arg320 each coordinate DNA.

This sequence belongs to the RuvB family. Homohexamer. Forms an RuvA(8)-RuvB(12)-Holliday junction (HJ) complex. HJ DNA is sandwiched between 2 RuvA tetramers; dsDNA enters through RuvA and exits via RuvB. An RuvB hexamer assembles on each DNA strand where it exits the tetramer. Each RuvB hexamer is contacted by two RuvA subunits (via domain III) on 2 adjacent RuvB subunits; this complex drives branch migration. In the full resolvosome a probable DNA-RuvA(4)-RuvB(12)-RuvC(2) complex forms which resolves the HJ.

The protein resides in the cytoplasm. It carries out the reaction ATP + H2O = ADP + phosphate + H(+). The RuvA-RuvB-RuvC complex processes Holliday junction (HJ) DNA during genetic recombination and DNA repair, while the RuvA-RuvB complex plays an important role in the rescue of blocked DNA replication forks via replication fork reversal (RFR). RuvA specifically binds to HJ cruciform DNA, conferring on it an open structure. The RuvB hexamer acts as an ATP-dependent pump, pulling dsDNA into and through the RuvAB complex. RuvB forms 2 homohexamers on either side of HJ DNA bound by 1 or 2 RuvA tetramers; 4 subunits per hexamer contact DNA at a time. Coordinated motions by a converter formed by DNA-disengaged RuvB subunits stimulates ATP hydrolysis and nucleotide exchange. Immobilization of the converter enables RuvB to convert the ATP-contained energy into a lever motion, pulling 2 nucleotides of DNA out of the RuvA tetramer per ATP hydrolyzed, thus driving DNA branch migration. The RuvB motors rotate together with the DNA substrate, which together with the progressing nucleotide cycle form the mechanistic basis for DNA recombination by continuous HJ branch migration. Branch migration allows RuvC to scan DNA until it finds its consensus sequence, where it cleaves and resolves cruciform DNA. This chain is Holliday junction branch migration complex subunit RuvB, found in Francisella philomiragia subsp. philomiragia (strain ATCC 25017 / CCUG 19701 / FSC 153 / O#319-036).